The sequence spans 467 residues: Gamma-aminobutyric acid receptor subunit gamma-3 (467 aa).

An N-terminal signal peptide occupies residues 1–17; the sequence is MAAKLLLLLCLFSGLHA. At 18 to 256 the chain is on the extracellular side; it reads RSRRVEEDEN…FELSRRMGYF (239 aa). The N-linked (GlcNAc...) asparagine glycan is linked to asparagine 110. The cysteines at positions 171 and 185 are disulfide-linked. The N-linked (GlcNAc...) asparagine glycan is linked to asparagine 228. The helical transmembrane segment at 257–277 threads the bilayer; the sequence is TIQTYIPCILTVVLSWVSFWI. At 278-283 the chain is on the cytoplasmic side; it reads KKDATP. Residues 284–303 traverse the membrane as a helical segment; it reads ARTTLGITTVLTMTTLSTIA. The Extracellular portion of the chain corresponds to 304-311; the sequence is RKSLPRVS. A helical transmembrane segment spans residues 312–332; the sequence is YVTAMDLFVTVCFLFVFAALM. The Cytoplasmic portion of the chain corresponds to 333–446; the sequence is EYATLNYYSS…DVSELDSYSR (114 aa). A helical membrane pass occupies residues 447 to 467; that stretch reads VFFPTSFLLFNLVYWVGYLYL.

It belongs to the ligand-gated ion channel (TC 1.A.9) family. Gamma-aminobutyric acid receptor (TC 1.A.9.5) subfamily. GABRG3 sub-subfamily. In terms of assembly, heteropentamer, formed by a combination of alpha (GABRA1-6), beta (GABRB1-3), gamma (GABRG1-3), delta (GABRD), epsilon (GABRE), rho (GABRR1-3), pi (GABRP) and theta (GABRQ) chains, each subunit exhibiting distinct physiological and pharmacological properties. Post-translationally, may be palmitoylated. As to expression, expressed in brain.

The protein resides in the postsynaptic cell membrane. The protein localises to the cell membrane. The enzyme catalyses chloride(in) = chloride(out). Gamma subunit of the heteropentameric ligand-gated chloride channel gated by gamma-aminobutyric acid (GABA), a major inhibitory neurotransmitter in the brain. GABA-gated chloride channels, also named GABA(A) receptors (GABAAR), consist of five subunits arranged around a central pore and contain GABA active binding site(s) located at the alpha and beta subunit interface(s). When activated by GABA, GABAARs selectively allow the flow of chloride across the cell membrane down their electrochemical gradient. This is Gamma-aminobutyric acid receptor subunit gamma-3 from Mus musculus (Mouse).